The following is a 188-amino-acid chain: Elongation factor P (188 aa).

This sequence belongs to the elongation factor P family.

The protein resides in the cytoplasm. It functions in the pathway protein biosynthesis; polypeptide chain elongation. Its function is as follows. Involved in peptide bond synthesis. Stimulates efficient translation and peptide-bond synthesis on native or reconstituted 70S ribosomes in vitro. Probably functions indirectly by altering the affinity of the ribosome for aminoacyl-tRNA, thus increasing their reactivity as acceptors for peptidyl transferase. The protein is Elongation factor P of Saccharopolyspora erythraea (strain ATCC 11635 / DSM 40517 / JCM 4748 / NBRC 13426 / NCIMB 8594 / NRRL 2338).